The primary structure comprises 366 residues: Cobalt-precorrin-5B C(1)-methyltransferase (366 aa).

It belongs to the CbiD family.

The catalysed reaction is Co-precorrin-5B + S-adenosyl-L-methionine = Co-precorrin-6A + S-adenosyl-L-homocysteine. It functions in the pathway cofactor biosynthesis; adenosylcobalamin biosynthesis; cob(II)yrinate a,c-diamide from sirohydrochlorin (anaerobic route): step 6/10. In terms of biological role, catalyzes the methylation of C-1 in cobalt-precorrin-5B to form cobalt-precorrin-6A. The sequence is that of Cobalt-precorrin-5B C(1)-methyltransferase from Pseudomonas aeruginosa (strain UCBPP-PA14).